A 209-amino-acid polypeptide reads, in one-letter code: rRNA N(6)-adenosine-methyltransferase METTL5 (209 aa).

Residues Gln-28, Thr-31, Gly-59, Cys-62, Val-64, Asp-81, and 108-109 (DV) each bind S-adenosyl-L-methionine.

This sequence belongs to the methyltransferase superfamily. PrmA family. In terms of assembly, heterodimer; heterodimerizes with TRMT112. Ubiquitously expressed in brain.

The protein resides in the nucleus. It is found in the presynapse. The protein localises to the postsynapse. It catalyses the reaction adenosine(1832) in 18S rRNA + S-adenosyl-L-methionine = N(6)-methyladenosine(1832) in 18S rRNA + S-adenosyl-L-homocysteine + H(+). With respect to regulation, rRNA N6-adenosine-methyltransferase activity is inhibited by zinc. Functionally, catalytic subunit of a heterodimer with TRMT112, which specifically methylates the 6th position of adenine in position 1832 of 18S rRNA. N6-methylation of adenine(1832) in 18S rRNA resides in the decoding center of 18S rRNA and is required for translation and embryonic stem cells (ESCs) pluripotency and differentiation. This Mus musculus (Mouse) protein is rRNA N(6)-adenosine-methyltransferase METTL5.